Reading from the N-terminus, the 166-residue chain is Cofilin-2 (166 aa).

Alanine 2 bears the N-acetylalanine mark. A Phosphoserine modification is found at serine 3. In terms of domain architecture, ADF-H spans 4–153; that stretch reads GVTVNDEVIK…KDRSTLGEKL (150 aa). At threonine 6 the chain carries Phosphothreonine. Residues 30–34 carry the Nuclear localization signal motif; it reads KKRKK.

This sequence belongs to the actin-binding proteins ADF family. The phosphorylation of Ser-24 may prevent recognition of the nuclear localization signal.

The protein resides in the nucleus matrix. It localises to the cytoplasm. It is found in the cytoskeleton. In terms of biological role, controls reversibly actin polymerization and depolymerization in a pH-sensitive manner. It has the ability to bind G- and F-actin in a 1:1 ratio of cofilin to actin. It is the major component of intranuclear and cytoplasmic actin rods. The polypeptide is Cofilin-2 (CFL2) (Bos taurus (Bovine)).